The primary structure comprises 178 residues: Large ribosomal subunit protein bL25 (178 aa).

This sequence belongs to the bacterial ribosomal protein bL25 family. CTC subfamily. Part of the 50S ribosomal subunit; part of the 5S rRNA/L5/L18/L25 subcomplex. Contacts the 5S rRNA. Binds to the 5S rRNA independently of L5 and L18.

Its function is as follows. This is one of the proteins that binds to the 5S RNA in the ribosome where it forms part of the central protuberance. The sequence is that of Large ribosomal subunit protein bL25 from Helicobacter pylori (strain G27).